Consider the following 174-residue polypeptide: Methylamine utilization protein MauL (174 aa).

Its pathway is one-carbon metabolism; methylamine degradation. Probably involved in TTQ prosthetic group biosynthesis. The sequence is that of Methylamine utilization protein MauL (mauL) from Methylophilus methylotrophus (Bacterium W3A1).